Here is a 1071-residue protein sequence, read N- to C-terminus: ATP-dependent helicase/deoxyribonuclease subunit B (1071 aa).

This sequence belongs to the helicase family. AddB/RexB type 2 subfamily. Heterodimer of AddA and RexB. The cofactor is Mg(2+).

Functionally, the heterodimer acts as both an ATP-dependent DNA helicase and an ATP-dependent, dual-direction single-stranded exonuclease. Recognizes the chi site generating a DNA molecule suitable for the initiation of homologous recombination. This subunit has 5' -&gt; 3' nuclease activity but not helicase activity. This is ATP-dependent helicase/deoxyribonuclease subunit B from Streptococcus pyogenes serotype M49 (strain NZ131).